We begin with the raw amino-acid sequence, 302 residues long: 33 kDa chaperonin (302 aa).

Cystine bridges form between Cys247/Cys249 and Cys280/Cys283.

It belongs to the HSP33 family. In terms of processing, under oxidizing conditions two disulfide bonds are formed involving the reactive cysteines. Under reducing conditions zinc is bound to the reactive cysteines and the protein is inactive.

Its subcellular location is the cytoplasm. Redox regulated molecular chaperone. Protects both thermally unfolding and oxidatively damaged proteins from irreversible aggregation. Plays an important role in the bacterial defense system toward oxidative stress. This is 33 kDa chaperonin from Prochlorococcus marinus (strain MIT 9301).